The following is a 233-amino-acid chain: MPAKQRTAKVNRNPDLIRGVGKYSRSQMYHKRGLWAIKAKNGGVFPRHDAKSKVDAPVEKPPKFYPAEDVKKPLPNRRTAKPAKLRASITPGTVLIILAGRFKGKRVVFLKQLASGLLLVTGPFKINGVPLRRVNQAYVIGTSTKVDISGVTLDKFDDKYFGKVAEKKKKKTEGEFFEAEKEEKKEIPQGKKDDQKAVDAALIKAIEAVPELKTYLGARFSLKQGMKPHELVF.

Residues 48-72 show a composition bias toward basic and acidic residues; sequence HDAKSKVDAPVEKPPKFYPAEDVKK. A disordered region spans residues 48-82; sequence HDAKSKVDAPVEKPPKFYPAEDVKKPLPNRRTAKP.

This sequence belongs to the eukaryotic ribosomal protein eL6 family.

This Arabidopsis thaliana (Mouse-ear cress) protein is Large ribosomal subunit protein eL6y (RPL6B).